A 165-amino-acid chain; its full sequence is Transcription antitermination protein NusB (165 aa).

The interval 139–165 (EAVRSHRRNKRPAADKPVATDKPAAAE) is disordered.

Belongs to the NusB family.

Involved in transcription antitermination. Required for transcription of ribosomal RNA (rRNA) genes. Binds specifically to the boxA antiterminator sequence of the ribosomal RNA (rrn) operons. In Laribacter hongkongensis (strain HLHK9), this protein is Transcription antitermination protein NusB.